The chain runs to 227 residues: Cytidylate kinase (227 aa).

10–18 (GPASSGKST) contributes to the ATP binding site.

Belongs to the cytidylate kinase family. Type 1 subfamily.

Its subcellular location is the cytoplasm. The catalysed reaction is CMP + ATP = CDP + ADP. It carries out the reaction dCMP + ATP = dCDP + ADP. This chain is Cytidylate kinase, found in Streptococcus agalactiae serotype Ia (strain ATCC 27591 / A909 / CDC SS700).